The sequence spans 61 residues: Large ribosomal subunit protein eL37 (61 aa).

Zn(2+) contacts are provided by Cys19, Cys22, Cys34, and Cys37. The C4-type zinc finger occupies 19–37; sequence CRRCGRNAYNVSKHYCAAC.

This sequence belongs to the eukaryotic ribosomal protein eL37 family. Zn(2+) is required as a cofactor.

Binds to the 23S rRNA. This chain is Large ribosomal subunit protein eL37, found in Saccharolobus islandicus (strain Y.N.15.51 / Yellowstone #2) (Sulfolobus islandicus).